A 1399-amino-acid polypeptide reads, in one-letter code: Alpha-glucan water dikinase 1, chloroplastic (1399 aa).

The transit peptide at 1-75 directs the protein to the chloroplast; sequence MSNSVVHNLL…GRPLSFVPRA (75 aa). Valine 76 carries the N-acetylvaline modification. The tract at residues 265-306 is disordered; the sequence is LLKKDNSNESPKSNGTSSSGREEKKKVSKQPERKKNYNTDKI. The span at 272-283 shows a compositional bias: polar residues; sequence NESPKSNGTSSS. The segment covering 284–306 has biased composition (basic and acidic residues); it reads GREEKKKVSKQPERKKNYNTDKI. The active-site Tele-phosphohistidine intermediate is the histidine 1004.

Belongs to the PEP-utilizing enzyme family. As to quaternary structure, homodimer. Mg(2+) is required as a cofactor.

It is found in the plastid. Its subcellular location is the chloroplast. The catalysed reaction is [(1-&gt;4)-alpha-D-glucosyl](n) + n ATP + n H2O = [(1-&gt;4)-6-phospho-alpha-D-glucosyl](n) + n AMP + n phosphate + 2n H(+). Functionally, mediates the incorporation of phosphate into starch-like alpha-glucan, mostly at the C-6 position of glucose units. Acts as an overall regulator of starch mobilization. Required for starch degradation, suggesting that the phosphate content of starch regulates its degradability. The chain is Alpha-glucan water dikinase 1, chloroplastic from Arabidopsis thaliana (Mouse-ear cress).